We begin with the raw amino-acid sequence, 325 residues long: Thiamine-monophosphate kinase (325 aa).

Mg(2+)-binding residues include Asp30, Ser45, Thr46, and Asp47. His54 lines the substrate pocket. Mg(2+)-binding residues include Asp75 and Asp122. ATP-binding positions include Gly121–Asp122 and Arg146. Residue Asp212 participates in Mg(2+) binding. ATP is bound at residue Ser214. Asp215 is a binding site for Mg(2+). Residues Glu263 and Tyr319 each coordinate substrate.

This sequence belongs to the thiamine-monophosphate kinase family.

It carries out the reaction thiamine phosphate + ATP = thiamine diphosphate + ADP. Its pathway is cofactor biosynthesis; thiamine diphosphate biosynthesis; thiamine diphosphate from thiamine phosphate: step 1/1. Functionally, catalyzes the ATP-dependent phosphorylation of thiamine-monophosphate (TMP) to form thiamine-pyrophosphate (TPP), the active form of vitamin B1. In Salmonella typhimurium (strain LT2 / SGSC1412 / ATCC 700720), this protein is Thiamine-monophosphate kinase (thiL).